The sequence spans 326 residues: Ribosomal RNA small subunit methyltransferase H (326 aa).

Residues 45 to 47, aspartate 65, aspartate 113, and glutamine 120 each bind S-adenosyl-L-methionine; that span reads GGH. Residues 299–326 are disordered; the sequence is PSAEEITRNPRSRSARLRAAERIAHDGR. The span at 316–326 shows a compositional bias: basic and acidic residues; it reads RAAERIAHDGR.

This sequence belongs to the methyltransferase superfamily. RsmH family.

Its subcellular location is the cytoplasm. It catalyses the reaction cytidine(1402) in 16S rRNA + S-adenosyl-L-methionine = N(4)-methylcytidine(1402) in 16S rRNA + S-adenosyl-L-homocysteine + H(+). Functionally, specifically methylates the N4 position of cytidine in position 1402 (C1402) of 16S rRNA. The protein is Ribosomal RNA small subunit methyltransferase H of Thermomicrobium roseum (strain ATCC 27502 / DSM 5159 / P-2).